A 286-amino-acid polypeptide reads, in one-letter code: Beta-lactamase SHV-8 (286 aa).

The N-terminal stretch at 1-21 (MRYIRLCIISLLATLPLAVHA) is a signal peptide. The active-site Acyl-ester intermediate is the S66. C73 and C119 are disulfide-bonded. The Proton acceptor role is filled by E164. 230 to 232 (KTG) contacts substrate.

Belongs to the class-A beta-lactamase family.

It catalyses the reaction a beta-lactam + H2O = a substituted beta-amino acid. Its function is as follows. SHV enzymes hydrolyze broad spectrum cephalosporins notably cefotaxime and ceftazidime. The protein is Beta-lactamase SHV-8 (bla) of Escherichia coli.